A 47-amino-acid polypeptide reads, in one-letter code: Snake venom metalloproteinase jararafibrase-4 (47 aa).

In terms of domain architecture, Peptidase M12B spans 6 to 47 (RYIELFLVVDHGMFMKYNGNSDKIYYYIHQMVNIMKXAYXYL). Glu-9 contacts Ca(2+).

The protein belongs to the venom metalloproteinase (M12B) family. Monomer. It depends on Zn(2+) as a cofactor. As to expression, expressed by the venom gland.

Its subcellular location is the secreted. Inhibited by 1,10-phenanthroline and EDTA. Functionally, the metalloproteinase is a probable venom zinc protease that induces local hemorrhage in the skin of rats. Degrades type-IV collagen, gelatin, laminin and fibronectin. Has fibrinolytic activities. Has high hemagglutinating activity on red blood cells. Cleaves insulin B chain at 29-His-|-Leu-30, and 38-Ala-|-Leu-39 bonds. The protein is Snake venom metalloproteinase jararafibrase-4 of Bothrops jararaca (Jararaca).